The chain runs to 714 residues: Cyclomaltodextrin glucanotransferase (714 aa).

The first 27 residues, 1-27 (MKSRYKRLTSLALSLSMALGISLPAWA), serve as a signal peptide directing secretion. Residues 28-165 (SPDTSVDNKV…NIKVVIDFAP (138 aa)) form an A1 region. Residues Asp54, Asn59, Asn60, Gly78, and Asp80 each coordinate Ca(2+). Residue 127-128 (YW) participates in substrate binding. Ca(2+) is bound at residue Asn166. Residues 166-229 (NHTSPADRDN…NLYDLADINH (64 aa)) form a b region. His167 is a substrate binding site. Residue Ile217 participates in Ca(2+) binding. Substrate is bound at residue 220–223 (NLYD). Residue Asp226 participates in Ca(2+) binding. The interval 230–434 (NNNAMDAYFK…LRKSNPAIAY (205 aa)) is A2. Residue Arg254 coordinates substrate. Catalysis depends on Asp256, which acts as the Nucleophile. 259–260 (KH) is a substrate binding site. His260 serves as a coordination point for Ca(2+). The active-site Proton donor is the Glu285. The substrate site is built by His355, Asp399, and Arg403. Positions 435–523 (GTTTERWVNN…GTAVWQYTAP (89 aa)) are c. The tract at residues 524–610 (ETSPAIGNVG…SNTFKSFNVL (87 aa)) is d. Residues 527–607 (PAIGNVGPTM…GTASNTFKSF (81 aa)) enclose the IPT/TIG domain. The CBM20 domain maps to 609 to 714 (VLTGDQVTVR…VGTVTVDWQN (106 aa)). The interval 611–714 (TGDQVTVRFL…VGTVTVDWQN (104 aa)) is e.

This sequence belongs to the glycosyl hydrolase 13 family. Monomer. It depends on Ca(2+) as a cofactor.

Its subcellular location is the secreted. The enzyme catalyses Cyclizes part of a (1-&gt;4)-alpha-D-glucan chain by formation of a (1-&gt;4)-alpha-D-glucosidic bond.. In Paenibacillus macerans (Bacillus macerans), this protein is Cyclomaltodextrin glucanotransferase (cgtM).